A 197-amino-acid polypeptide reads, in one-letter code: Holliday junction branch migration complex subunit RuvA (197 aa).

The tract at residues M1–H63 is domain I. The interval T64–S142 is domain II. Residues K143–I147 are flexible linker. The segment at N148–K197 is domain III.

Belongs to the RuvA family. In terms of assembly, homotetramer. Forms an RuvA(8)-RuvB(12)-Holliday junction (HJ) complex. HJ DNA is sandwiched between 2 RuvA tetramers; dsDNA enters through RuvA and exits via RuvB. An RuvB hexamer assembles on each DNA strand where it exits the tetramer. Each RuvB hexamer is contacted by two RuvA subunits (via domain III) on 2 adjacent RuvB subunits; this complex drives branch migration. In the full resolvosome a probable DNA-RuvA(4)-RuvB(12)-RuvC(2) complex forms which resolves the HJ.

It localises to the cytoplasm. In terms of biological role, the RuvA-RuvB-RuvC complex processes Holliday junction (HJ) DNA during genetic recombination and DNA repair, while the RuvA-RuvB complex plays an important role in the rescue of blocked DNA replication forks via replication fork reversal (RFR). RuvA specifically binds to HJ cruciform DNA, conferring on it an open structure. The RuvB hexamer acts as an ATP-dependent pump, pulling dsDNA into and through the RuvAB complex. HJ branch migration allows RuvC to scan DNA until it finds its consensus sequence, where it cleaves and resolves the cruciform DNA. This Streptococcus mutans serotype c (strain ATCC 700610 / UA159) protein is Holliday junction branch migration complex subunit RuvA.